Reading from the N-terminus, the 548-residue chain is 4-methyl-5-nitrocatechol 5-monooxygenase (548 aa).

The protein belongs to the PheA/TfdB FAD monooxygenase family. In terms of assembly, monomer. FAD is required as a cofactor.

The catalysed reaction is 4-methyl-5-nitrocatechol + NADPH + O2 = 2-hydroxy-5-methylquinone + nitrite + NADP(+) + H2O + H(+). The enzyme catalyses 4-methyl-5-nitrocatechol + NADH + O2 = 2-hydroxy-5-methylquinone + nitrite + NAD(+) + H2O + H(+). With respect to regulation, activated by magnesium or manganese ions. Inhibited by concentrations of 4-methyl-5-nitrocatechol (MNC) above 2 mM. Functionally, involved in the degradation of 2,4-dinitrotoluene (2,4-DNT). Catalyzes the removal of the nitro group from 4-methyl-5-nitrocatechol (MNC) to yield 2-hydroxy-5-methylquinone. It can use both NADH and NADPH as electron donors, but prefers NADPH. Also able to use 4-nitrocatechol as substrate. The sequence is that of 4-methyl-5-nitrocatechol 5-monooxygenase from Burkholderia sp.